We begin with the raw amino-acid sequence, 482 residues long: UDP-N-acetylmuramate--L-alanine ligase (482 aa).

ATP is bound at residue 123-129 (GTHGKTT).

Belongs to the MurCDEF family.

The protein resides in the cytoplasm. The catalysed reaction is UDP-N-acetyl-alpha-D-muramate + L-alanine + ATP = UDP-N-acetyl-alpha-D-muramoyl-L-alanine + ADP + phosphate + H(+). Its pathway is cell wall biogenesis; peptidoglycan biosynthesis. In terms of biological role, cell wall formation. The sequence is that of UDP-N-acetylmuramate--L-alanine ligase from Pseudomonas putida (strain GB-1).